Consider the following 186-residue polypeptide: dCTP deaminase (186 aa).

106-111 is a dCTP binding site; the sequence is KSTYAR. Glu132 serves as the catalytic Proton donor/acceptor. Gln151, Tyr166, and Gln176 together coordinate dCTP.

Belongs to the dCTP deaminase family. As to quaternary structure, homotrimer.

The catalysed reaction is dCTP + H2O + H(+) = dUTP + NH4(+). Its pathway is pyrimidine metabolism; dUMP biosynthesis; dUMP from dCTP (dUTP route): step 1/2. Catalyzes the deamination of dCTP to dUTP. The chain is dCTP deaminase from Nautilia profundicola (strain ATCC BAA-1463 / DSM 18972 / AmH).